We begin with the raw amino-acid sequence, 668 residues long: MTKRKKLRTSGEGLCPPKPLKNPRLGDFYGDPQSSMLGCLHHPEEPEGKLGPVPSTQQHGEEPGKAVSSSPDEETGSPCRLLRQPEKEPAPLPPSQNSFGRFVPQFAKSRKTVTRKEEMKDEDRGSGAFSLETIAESSAQSPGCQLLVETLGVPLQEATELGDPTQADSARPEQSSQSPVQAVPGSGDSQPDDPPDRGTGLSASQRASQDHLSEQGADDSKPETDRVPGDGGQKEHLPSIDSEGEKPDRGAPQEGGAQRTAGAGLPGGPQEEGDGVPCTPASAPTSGPAPGLGPASWCLEPGSVAQGSPDPQQTPSRMGREGEGTHSSLGCSSLGMVVIADLSTDPTELEERALEVAGPDGQASAISPASPRRKAADGGHRRALPGCTSLTGETTGESGEAGQDGKPPGDVLVGPTASLALAPGSGESMMGAGDSGHASPDTGPCVNQKQEPGPAQEEAELGGQNLERDLEGFRVSPQASVVLEHREIADDPLQEPGAQQGIPDTTSELAGQRDHLPHSADQGTWADSLAVELDFLLDSQIQDALDASDFEAPPEQLFPSGNKPGPCWPGPSSHANGDPVAVAKAQPRTFVGIQASEASRMEDATNVVRGLIVELSNLNRLIMGTHRDLEAFKRLNYRKTKLGGKAPLPYPSKGPGNIPRGDPPWREL.

Disordered stretches follow at residues 1 to 142 (MTKR…AQSP), 155 to 333 (LQEA…GCSS), 349 to 465 (LEER…GGQN), 482 to 521 (VLEH…HSAD), and 642 to 668 (LGGK…WREL). Over residues 114–125 (TRKEEMKDEDRG) the composition is skewed to basic and acidic residues. A compositionally biased stretch (polar residues) spans 166-180 (QADSARPEQSSQSPV). The span at 208–251 (SQDHLSEQGADDSKPETDRVPGDGGQKEHLPSIDSEGEKPDRGA) shows a compositional bias: basic and acidic residues. A compositionally biased stretch (low complexity) spans 279–296 (TPASAPTSGPAPGLGPAS). Polar residues predominate over residues 305-316 (AQGSPDPQQTPS). Position 370 is a phosphoserine (serine 370). The segment covering 391–400 (TGETTGESGE) has biased composition (low complexity).

As to quaternary structure, interacts with HSF2BP (via N-terminus) and BRCA2; the interaction with HSF2BP is direct and allows the formation of a ternary complex. The complex BRME1:HSF2BP:BRCA2 interacts with SPATA22, MEIOB and RAD51.

Its subcellular location is the chromosome. Its function is as follows. Meiotic recombination factor component of recombination bridges involved in meiotic double-strand break repair. Modulates the localization of recombinases DMC1:RAD51 to meiotic double-strand break (DSB) sites through the interaction with and stabilization of the BRCA2:HSF2BP complex during meiotic recombination. Indispensable for the DSB repair, homologous synapsis, and crossover formation that are needed for progression past metaphase I, is essential for spermatogenesis and male fertility. In Homo sapiens (Human), this protein is Break repair meiotic recombinase recruitment factor 1.